We begin with the raw amino-acid sequence, 437 residues long: UDP-N-acetylmuramate--L-alanine ligase (437 aa).

108 to 114 is an ATP binding site; it reads GAHGKTS.

Belongs to the MurCDEF family.

It localises to the cytoplasm. The catalysed reaction is UDP-N-acetyl-alpha-D-muramate + L-alanine + ATP = UDP-N-acetyl-alpha-D-muramoyl-L-alanine + ADP + phosphate + H(+). Its pathway is cell wall biogenesis; peptidoglycan biosynthesis. Functionally, cell wall formation. The polypeptide is UDP-N-acetylmuramate--L-alanine ligase (Lysinibacillus sphaericus (strain C3-41)).